Consider the following 344-residue polypeptide: Protein pelota homolog (344 aa).

Belongs to the eukaryotic release factor 1 family. Pelota subfamily. In terms of assembly, monomer. The cofactor is a divalent metal cation.

Its subcellular location is the cytoplasm. Its function is as follows. May function in recognizing stalled ribosomes, interact with stem-loop structures in stalled mRNA molecules, and effect endonucleolytic cleavage of the mRNA. May play a role in the release non-functional ribosomes and degradation of damaged mRNAs. Has endoribonuclease activity. This Archaeoglobus fulgidus (strain ATCC 49558 / DSM 4304 / JCM 9628 / NBRC 100126 / VC-16) protein is Protein pelota homolog.